The primary structure comprises 541 residues: Chaperonin GroEL (541 aa).

Residues 29-32 (TLGP), 86-90 (DGTTT), G413, 478-480 (NAL), and D494 each bind ATP.

Belongs to the chaperonin (HSP60) family. As to quaternary structure, forms a cylinder of 14 subunits composed of two heptameric rings stacked back-to-back. Interacts with the co-chaperonin GroES.

It is found in the cytoplasm. The enzyme catalyses ATP + H2O + a folded polypeptide = ADP + phosphate + an unfolded polypeptide.. Its function is as follows. Together with its co-chaperonin GroES, plays an essential role in assisting protein folding. The GroEL-GroES system forms a nano-cage that allows encapsulation of the non-native substrate proteins and provides a physical environment optimized to promote and accelerate protein folding. The polypeptide is Chaperonin GroEL (Lachnoclostridium phytofermentans (strain ATCC 700394 / DSM 18823 / ISDg) (Clostridium phytofermentans)).